A 190-amino-acid polypeptide reads, in one-letter code: Elongation factor P (190 aa).

N6-(3,6-diaminohexanoyl)-5-hydroxylysine is present on lysine 34.

This sequence belongs to the elongation factor P family. May be beta-lysylated on the epsilon-amino group of Lys-34 by the combined action of EpmA and EpmB, and then hydroxylated on the C5 position of the same residue by EpmC (if this protein is present). Lysylation is critical for the stimulatory effect of EF-P on peptide-bond formation. The lysylation moiety may extend toward the peptidyltransferase center and stabilize the terminal 3-CCA end of the tRNA. Hydroxylation of the C5 position on Lys-34 may allow additional potential stabilizing hydrogen-bond interactions with the P-tRNA.

It localises to the cytoplasm. Its pathway is protein biosynthesis; polypeptide chain elongation. In terms of biological role, involved in peptide bond synthesis. Alleviates ribosome stalling that occurs when 3 or more consecutive Pro residues or the sequence PPG is present in a protein, possibly by augmenting the peptidyl transferase activity of the ribosome. Modification of Lys-34 is required for alleviation. The chain is Elongation factor P from Psychrobacter cryohalolentis (strain ATCC BAA-1226 / DSM 17306 / VKM B-2378 / K5).